We begin with the raw amino-acid sequence, 121 residues long: MHTLDTVDASSLRTDIPDFRPGDTLKVHVRVVEGNRSRVQVFQGVVIRRQGSGVRETFTVRKVSFGVGVERTFPVHTPVIEKIEVVTRGHVRRAKLYYLRDLRGKAAKIREKRENRETTEA.

It belongs to the bacterial ribosomal protein bL19 family.

Functionally, this protein is located at the 30S-50S ribosomal subunit interface and may play a role in the structure and function of the aminoacyl-tRNA binding site. The sequence is that of Large ribosomal subunit protein bL19 from Acidothermus cellulolyticus (strain ATCC 43068 / DSM 8971 / 11B).